Here is a 232-residue protein sequence, read N- to C-terminus: tRNA1(Val) (adenine(37)-N6)-methyltransferase (232 aa).

It belongs to the methyltransferase superfamily. tRNA (adenine-N(6)-)-methyltransferase family.

The protein resides in the cytoplasm. It catalyses the reaction adenosine(37) in tRNA1(Val) + S-adenosyl-L-methionine = N(6)-methyladenosine(37) in tRNA1(Val) + S-adenosyl-L-homocysteine + H(+). In terms of biological role, specifically methylates the adenine in position 37 of tRNA(1)(Val) (anticodon cmo5UAC). In Pseudoalteromonas translucida (strain TAC 125), this protein is tRNA1(Val) (adenine(37)-N6)-methyltransferase.